A 474-amino-acid chain; its full sequence is Glutamate--tRNA ligase 1 (474 aa).

Residues 11–21 (PSPTGYLHIGG) carry the 'HIGH' region motif. Residues 240 to 244 (KLSKR) carry the 'KMSKS' region motif. Lysine 243 contacts ATP.

Belongs to the class-I aminoacyl-tRNA synthetase family. Glutamate--tRNA ligase type 1 subfamily. In terms of assembly, monomer.

The protein resides in the cytoplasm. It carries out the reaction tRNA(Glu) + L-glutamate + ATP = L-glutamyl-tRNA(Glu) + AMP + diphosphate. Catalyzes the attachment of glutamate to tRNA(Glu) in a two-step reaction: glutamate is first activated by ATP to form Glu-AMP and then transferred to the acceptor end of tRNA(Glu). The protein is Glutamate--tRNA ligase 1 of Mesorhizobium japonicum (strain LMG 29417 / CECT 9101 / MAFF 303099) (Mesorhizobium loti (strain MAFF 303099)).